Consider the following 432-residue polypeptide: Anaerobic glycerol-3-phosphate dehydrogenase subunit B (432 aa).

The protein belongs to the anaerobic G-3-P dehydrogenase subunit B family. As to quaternary structure, composed of a catalytic GlpA/B dimer and of membrane bound GlpC. FMN serves as cofactor.

The catalysed reaction is a quinone + sn-glycerol 3-phosphate = dihydroxyacetone phosphate + a quinol. Its pathway is polyol metabolism; glycerol degradation via glycerol kinase pathway; glycerone phosphate from sn-glycerol 3-phosphate (anaerobic route): step 1/1. Its function is as follows. Conversion of glycerol 3-phosphate to dihydroxyacetone. Uses fumarate or nitrate as electron acceptor. The protein is Anaerobic glycerol-3-phosphate dehydrogenase subunit B of Histophilus somni (strain 129Pt) (Haemophilus somnus).